Reading from the N-terminus, the 390-residue chain is Formate-dependent phosphoribosylglycinamide formyltransferase (390 aa).

Residues 19 to 20 (EL) and glutamate 79 contribute to the N(1)-(5-phospho-beta-D-ribosyl)glycinamide site. Residues arginine 111, lysine 152, 157–162 (SSGKGQ), 192–195 (EGFV), and glutamate 200 contribute to the ATP site. The region spanning 116-305 (RLAAEELGLP…EFAIHARAIL (190 aa)) is the ATP-grasp domain. Mg(2+) contacts are provided by glutamate 264 and glutamate 276. Residues aspartate 283, lysine 353, and 360 to 361 (RR) contribute to the N(1)-(5-phospho-beta-D-ribosyl)glycinamide site.

This sequence belongs to the PurK/PurT family. Homodimer.

It catalyses the reaction N(1)-(5-phospho-beta-D-ribosyl)glycinamide + formate + ATP = N(2)-formyl-N(1)-(5-phospho-beta-D-ribosyl)glycinamide + ADP + phosphate + H(+). Its pathway is purine metabolism; IMP biosynthesis via de novo pathway; N(2)-formyl-N(1)-(5-phospho-D-ribosyl)glycinamide from N(1)-(5-phospho-D-ribosyl)glycinamide (formate route): step 1/1. Its function is as follows. Involved in the de novo purine biosynthesis. Catalyzes the transfer of formate to 5-phospho-ribosyl-glycinamide (GAR), producing 5-phospho-ribosyl-N-formylglycinamide (FGAR). Formate is provided by PurU via hydrolysis of 10-formyl-tetrahydrofolate. The sequence is that of Formate-dependent phosphoribosylglycinamide formyltransferase from Marinobacter nauticus (strain ATCC 700491 / DSM 11845 / VT8) (Marinobacter aquaeolei).